Here is a 122-residue protein sequence, read N- to C-terminus: Large ribosomal subunit protein uL14 (122 aa).

This sequence belongs to the universal ribosomal protein uL14 family. As to quaternary structure, part of the 50S ribosomal subunit. Forms a cluster with proteins L3 and L19. In the 70S ribosome, L14 and L19 interact and together make contacts with the 16S rRNA in bridges B5 and B8.

Binds to 23S rRNA. Forms part of two intersubunit bridges in the 70S ribosome. The protein is Large ribosomal subunit protein uL14 of Paraburkholderia phytofirmans (strain DSM 17436 / LMG 22146 / PsJN) (Burkholderia phytofirmans).